Consider the following 181-residue polypeptide: Large ribosomal subunit protein uL5 (181 aa).

This sequence belongs to the universal ribosomal protein uL5 family. As to quaternary structure, part of the 50S ribosomal subunit; part of the 5S rRNA/L5/L18/L25 subcomplex. Contacts the 5S rRNA and the P site tRNA. Forms a bridge to the 30S subunit in the 70S ribosome.

Its function is as follows. This is one of the proteins that bind and probably mediate the attachment of the 5S RNA into the large ribosomal subunit, where it forms part of the central protuberance. In the 70S ribosome it contacts protein S13 of the 30S subunit (bridge B1b), connecting the 2 subunits; this bridge is implicated in subunit movement. Contacts the P site tRNA; the 5S rRNA and some of its associated proteins might help stabilize positioning of ribosome-bound tRNAs. The polypeptide is Large ribosomal subunit protein uL5 (Trichodesmium erythraeum (strain IMS101)).